A 371-amino-acid polypeptide reads, in one-letter code: MPVFLSSRFLFFCIIVPLLISITLYQLDTFDPAHHPADSLISSTASIPPLINERFLTGAEFIGVGLLNSPEDIAYHEDSGFIYTGCVDGWVKRVKVAESVNDSLVEDLVNTGGRPLGIAFGIHGEVIVADAYKGLLNISGDGKKTELLTEEADGVRFKLPDAVTVADNGVLYFTDGSYKYNLHQFSFDILEGKPHGRLMSFDPTTKVTRVLLRDLYFANGVSLSPDQTHLVFCETPIRRCSKYYINGGRVELFIQGLPGYPDNIRYDGDGHYWIAMPSGVTTLWKLSMKYPFLRKITAMAAKYGYEPMFMENAGVLQVDLDGNPIAYYHDQALSHITTGVKIGNYLYCGSLWHSHILRLDLLKYPAQNKKL.

An N-terminal signal peptide occupies residues 1–21; the sequence is MPVFLSSRFLFFCIIVPLLIS. 2 N-linked (GlcNAc...) asparagine glycosylation sites follow: Asn-101 and Asn-137. The residue at position 303 (Tyr-303) is a Phosphotyrosine.

It belongs to the strictosidine synthase family.

It is found in the vacuole. This is Protein STRICTOSIDINE SYNTHASE-LIKE 6 from Arabidopsis thaliana (Mouse-ear cress).